The primary structure comprises 190 residues: Threonylcarbamoyl-AMP synthase (190 aa).

One can recognise a YrdC-like domain in the interval 7–190 (GDAIAAAIDV…ALTGELFRQG (184 aa)).

The protein belongs to the SUA5 family. TsaC subfamily.

The protein resides in the cytoplasm. The enzyme catalyses L-threonine + hydrogencarbonate + ATP = L-threonylcarbamoyladenylate + diphosphate + H2O. Functionally, required for the formation of a threonylcarbamoyl group on adenosine at position 37 (t(6)A37) in tRNAs that read codons beginning with adenine. Catalyzes the conversion of L-threonine, HCO(3)(-)/CO(2) and ATP to give threonylcarbamoyl-AMP (TC-AMP) as the acyladenylate intermediate, with the release of diphosphate. This is Threonylcarbamoyl-AMP synthase from Shigella dysenteriae serotype 1 (strain Sd197).